The primary structure comprises 393 residues: Xyloside xylosyltransferase 1 (393 aa).

Topologically, residues 1–23 are cytoplasmic; that stretch reads MGLLRGGLPCARAMARLGAVRSH. The helical; Signal-anchor for type II membrane protein transmembrane segment at 24–44 threads the bilayer; sequence YCALLLAAALAVCAFYYLGSG. Over 45-393 the chain is Lumenal; sequence RETFSSATKR…GNCNTPIPED (349 aa). 104–106 serves as a coordination point for UDP-alpha-D-xylose; it reads MFT. D226 is a Mn(2+) binding site. L227 is a UDP-alpha-D-xylose binding site. Residue D228 participates in Mn(2+) binding. The tract at residues 263–266 is interaction with target proteins; the sequence is HTFW. S290, L328, and Q331 together coordinate UDP-alpha-D-xylose. Residues Q331 and W360 each coordinate a glycoprotein. Disulfide bonds link C350–C375 and C357–C386. Residue H383 coordinates Mn(2+). Residue N385 coordinates a glycoprotein.

The protein belongs to the glycosyltransferase 8 family. In terms of assembly, homodimer. Dimer formation may be essential for the retention in endoplasmic reticulum. Mg(2+) serves as cofactor. The cofactor is Mn(2+).

It is found in the endoplasmic reticulum membrane. It carries out the reaction 3-O-[alpha-D-xylosyl-(1-&gt;3)-beta-D-glucosyl]-L-seryl-[EGF-like domain protein] + UDP-alpha-D-xylose = 3-O-[alpha-D-xylosyl-(1-&gt;3)-alpha-D-xylosyl-(1-&gt;3)-beta-D-glucosyl]-L-seryl-[EGF-like domain protein] + UDP + H(+). Its function is as follows. Alpha-1,3-xylosyltransferase, which elongates the O-linked xylose-glucose disaccharide attached to EGF-like repeats in the extracellular domain of target proteins by catalyzing the addition of the second xylose. Known targets include Notch proteins and coagulation factors, such as F9. In Homo sapiens (Human), this protein is Xyloside xylosyltransferase 1 (XXYLT1).